We begin with the raw amino-acid sequence, 496 residues long: Probable cytosol aminopeptidase (496 aa).

Residues Lys-266 and Asp-271 each contribute to the Mn(2+) site. The active site involves Lys-278. Mn(2+) is bound by residues Asp-289, Asp-348, and Glu-350. Arg-352 is a catalytic residue.

This sequence belongs to the peptidase M17 family. Mn(2+) is required as a cofactor.

Its subcellular location is the cytoplasm. It catalyses the reaction Release of an N-terminal amino acid, Xaa-|-Yaa-, in which Xaa is preferably Leu, but may be other amino acids including Pro although not Arg or Lys, and Yaa may be Pro. Amino acid amides and methyl esters are also readily hydrolyzed, but rates on arylamides are exceedingly low.. The catalysed reaction is Release of an N-terminal amino acid, preferentially leucine, but not glutamic or aspartic acids.. Presumably involved in the processing and regular turnover of intracellular proteins. Catalyzes the removal of unsubstituted N-terminal amino acids from various peptides. This Pseudomonas fluorescens (strain SBW25) protein is Probable cytosol aminopeptidase.